Here is a 252-residue protein sequence, read N- to C-terminus: Fructose-1,6-bisphosphatase/inositol-1-monophosphatase (252 aa).

The Mg(2+) site is built by Glu65, Asp81, Ile83, and Asp84. Residues 84 to 86 (DGS), Arg170, Phe175, and Arg194 contribute to the substrate site. Asp201 contributes to the Mg(2+) binding site.

The protein belongs to the inositol monophosphatase superfamily. FBPase class 4 family. In terms of assembly, homodimer. Requires Mg(2+) as cofactor.

It carries out the reaction beta-D-fructose 1,6-bisphosphate + H2O = beta-D-fructose 6-phosphate + phosphate. The enzyme catalyses a myo-inositol phosphate + H2O = myo-inositol + phosphate. Its activity is regulated as follows. IMPase activity is inhibited by Ca(2+) and Zn(2+). In contrast to mammalian I-1-P phosphatases, is not inhibited by Li(+) up to 100 mM. Phosphatase with broad specificity; it can dephosphorylate fructose 1,6-bisphosphate, both D and L isomers of inositol-1-phosphate (I-1-P), 2'-AMP, pNPP, beta-glycerol phosphate, and alpha-D-glucose-1-phosphate. Cannot hydrolyze glucose-6-phosphate, fructose-6-phosphate, NAD(+) or 5'-AMP. May be involved in the biosynthesis of a unique osmolyte, di-myo-inositol 1,1-phosphate. In Methanocaldococcus jannaschii (strain ATCC 43067 / DSM 2661 / JAL-1 / JCM 10045 / NBRC 100440) (Methanococcus jannaschii), this protein is Fructose-1,6-bisphosphatase/inositol-1-monophosphatase (suhB).